Here is a 901-residue protein sequence, read N- to C-terminus: Protein translocase subunit SecA (901 aa).

ATP contacts are provided by residues Gln-87, 105 to 109 (GEGKT), and Asp-512. The segment at 859-901 (HQDDDSAAAAALAAQTGERKVGRNDPCPCGSGKKYKQCHGRLQ) is disordered. 4 residues coordinate Zn(2+): Cys-885, Cys-887, Cys-896, and His-897. Over residues 891–901 (KKYKQCHGRLQ) the composition is skewed to basic residues.

The protein belongs to the SecA family. In terms of assembly, monomer and homodimer. Part of the essential Sec protein translocation apparatus which comprises SecA, SecYEG and auxiliary proteins SecDF-YajC and YidC. Zn(2+) is required as a cofactor.

The protein resides in the cell inner membrane. Its subcellular location is the cytoplasm. It carries out the reaction ATP + H2O + cellular proteinSide 1 = ADP + phosphate + cellular proteinSide 2.. Part of the Sec protein translocase complex. Interacts with the SecYEG preprotein conducting channel. Has a central role in coupling the hydrolysis of ATP to the transfer of proteins into and across the cell membrane, serving both as a receptor for the preprotein-SecB complex and as an ATP-driven molecular motor driving the stepwise translocation of polypeptide chains across the membrane. This is Protein translocase subunit SecA from Escherichia coli O9:H4 (strain HS).